Reading from the N-terminus, the 158-residue chain is MQLYVDLQIACSDPNDLPMPASFEKWIEAAILGGSESHREEAELTVRIVDQDEIMQLNHQYRNISKTTNVLAFPFQNPPGLTLPLLGDLIICKEVVESEAKLQGKSLTAHWAHMSIHSTLHLLGYDHIEQAEAVEMESLETKLLTELGFTDPYLSEKE.

Zn(2+)-binding residues include His-117, His-121, and His-127.

Belongs to the endoribonuclease YbeY family. It depends on Zn(2+) as a cofactor.

The protein localises to the cytoplasm. Functionally, single strand-specific metallo-endoribonuclease involved in late-stage 70S ribosome quality control and in maturation of the 3' terminus of the 16S rRNA. This Psychromonas ingrahamii (strain DSM 17664 / CCUG 51855 / 37) protein is Endoribonuclease YbeY.